The primary structure comprises 154 residues: MKIYEGKLIAEGKKFGIVVSRFNEFITNKLLEGALDALKRHGALNENIEIAWVPGAFEIPLIAKKMAESKRYDAVIALGAVIRGETPHFDYVANEVSKGIAKISLDTEVPVIFGVLTTDTIEQAIVRAGTKGGNKGFEAAVTAIEMANLMEEIK.

5-amino-6-(D-ribitylamino)uracil is bound by residues Phe22, 56–58, and 80–82; these read AFE and AVI. 85-86 lines the (2S)-2-hydroxy-3-oxobutyl phosphate pocket; it reads ET. His88 acts as the Proton donor in catalysis. Phe113 is a binding site for 5-amino-6-(D-ribitylamino)uracil. Arg127 lines the (2S)-2-hydroxy-3-oxobutyl phosphate pocket.

Belongs to the DMRL synthase family.

It catalyses the reaction (2S)-2-hydroxy-3-oxobutyl phosphate + 5-amino-6-(D-ribitylamino)uracil = 6,7-dimethyl-8-(1-D-ribityl)lumazine + phosphate + 2 H2O + H(+). It participates in cofactor biosynthesis; riboflavin biosynthesis; riboflavin from 2-hydroxy-3-oxobutyl phosphate and 5-amino-6-(D-ribitylamino)uracil: step 1/2. Functionally, catalyzes the formation of 6,7-dimethyl-8-ribityllumazine by condensation of 5-amino-6-(D-ribitylamino)uracil with 3,4-dihydroxy-2-butanone 4-phosphate. This is the penultimate step in the biosynthesis of riboflavin. In Thermoanaerobacter sp. (strain X514), this protein is 6,7-dimethyl-8-ribityllumazine synthase.